The sequence spans 451 residues: MMTAPKITFIGAGSTIFVKNILGDVFHREALKSAHVALMDIDETRLEESHIVVRKLMDSAGASGRITCHTNQKAALQDADFVVVAFQIGGYEPCTVTDFEVCKRHGLEQTIADTLGPGGIMRALRTIPHLWRICEDMTEVCPKATMLNYVNPMAMNTWAMYARYPHIKQVGLCHSVQGTAEELARDLNIDPTSLRYRCAGINHMAFYLELERKTADGTYVNLYPELLAAYDAGQAPKPNIHGNERCQNIVRYEMFKKLGYFVTESSEHFAEYTPWFIKPGREDLIARYKVPLDEYPKRCVEQLANWHKELEEYKTAERIDIKPSREYASTIMNALWTGEPSVIYGNVRNEGLIDNLPQGSCVEVACLVDANGIQPTKVGTIPSHLAAMMQTNINVQTLLTEAILTENRDRVYHAAMMDPHTAAVLGIEEIYALVDDLIAAHGDWLPAWLRR.

Position 5-71 (5-71) interacts with NAD(+); it reads PKITFIGAGS…ASGRITCHTN (67 aa). Asparagine 151 lines the substrate pocket. Cysteine 173 contributes to the Mn(2+) binding site. Residue histidine 174 is the Proton donor of the active site. Histidine 203 lines the Mn(2+) pocket. Residue arginine 287 participates in substrate binding.

The protein belongs to the glycosyl hydrolase 4 family. In terms of assembly, homodimer. The cofactor is Mn(2+). It depends on NAD(+) as a cofactor.

The enzyme catalyses Hydrolysis of terminal, non-reducing alpha-D-galactose residues in alpha-D-galactosides, including galactose oligosaccharides, galactomannans and galactolipids.. This chain is Alpha-galactosidase (melA), found in Salmonella typhimurium (strain LT2 / SGSC1412 / ATCC 700720).